Reading from the N-terminus, the 880-residue chain is DNA mismatch repair protein MutS (880 aa).

605 to 612 (GPNMSGKS) lines the ATP pocket. The disordered stretch occupies residues 790–829 (QETAAVPSRGVEPPAPVIEPTPAKEQTPVKEQTTPLVEES). Residues 818 to 829 (VKEQTTPLVEES) show a composition bias toward polar residues.

This sequence belongs to the DNA mismatch repair MutS family.

This protein is involved in the repair of mismatches in DNA. It is possible that it carries out the mismatch recognition step. This protein has a weak ATPase activity. This is DNA mismatch repair protein MutS from Limosilactobacillus fermentum (strain NBRC 3956 / LMG 18251) (Lactobacillus fermentum).